A 127-amino-acid chain; its full sequence is Large ribosomal subunit protein bL12 (127 aa).

It belongs to the bacterial ribosomal protein bL12 family. As to quaternary structure, homodimer. Part of the ribosomal stalk of the 50S ribosomal subunit. Forms a multimeric L10(L12)X complex, where L10 forms an elongated spine to which 2 to 4 L12 dimers bind in a sequential fashion. Binds GTP-bound translation factors.

Its function is as follows. Forms part of the ribosomal stalk which helps the ribosome interact with GTP-bound translation factors. Is thus essential for accurate translation. The chain is Large ribosomal subunit protein bL12 from Thiobacillus denitrificans (strain ATCC 25259 / T1).